Reading from the N-terminus, the 132-residue chain is Putative nickel-responsive regulator (132 aa).

Ni(2+) contacts are provided by histidine 77, histidine 88, histidine 90, and cysteine 96.

This sequence belongs to the transcriptional regulatory CopG/NikR family. It depends on Ni(2+) as a cofactor.

Transcriptional regulator. In Brucella abortus (strain S19), this protein is Putative nickel-responsive regulator.